A 207-amino-acid polypeptide reads, in one-letter code: Uracil phosphoribosyltransferase (207 aa).

Residues Arg-77, Arg-102, and 129–137 (DPMLATGGS) contribute to the 5-phospho-alpha-D-ribose 1-diphosphate site. Uracil-binding positions include Ile-192 and 197 to 199 (GDA). Asp-198 lines the 5-phospho-alpha-D-ribose 1-diphosphate pocket.

The protein belongs to the UPRTase family. Mg(2+) serves as cofactor.

It catalyses the reaction UMP + diphosphate = 5-phospho-alpha-D-ribose 1-diphosphate + uracil. Its pathway is pyrimidine metabolism; UMP biosynthesis via salvage pathway; UMP from uracil: step 1/1. With respect to regulation, allosterically activated by GTP. Catalyzes the conversion of uracil and 5-phospho-alpha-D-ribose 1-diphosphate (PRPP) to UMP and diphosphate. The sequence is that of Uracil phosphoribosyltransferase from Dictyoglomus thermophilum (strain ATCC 35947 / DSM 3960 / H-6-12).